A 342-amino-acid chain; its full sequence is uncharacterized protein (342 aa).

Positions 3-173 constitute a MurNAc-LAA domain; the sequence is IAIRGGHNFL…LIGYLIAKGI (171 aa).

It to C.perfringens CPE1502.

This is an uncharacterized protein from Clostridium perfringens.